A 678-amino-acid polypeptide reads, in one-letter code: DNA gyrase subunit B (678 aa).

Positions 456–570 constitute a Toprim domain; it reads SELYVVEGDS…HGYVFLAQPP (115 aa). Positions 462, 535, and 537 each coordinate Mg(2+).

It belongs to the type II topoisomerase GyrB family. As to quaternary structure, heterotetramer, composed of two GyrA and two GyrB chains. In the heterotetramer, GyrA contains the active site tyrosine that forms a transient covalent intermediate with the DNA, while GyrB binds cofactors catalyzes ATP hydrolysis. It depends on Mg(2+) as a cofactor. Mn(2+) serves as cofactor. Requires Ca(2+) as cofactor.

It localises to the cytoplasm. It carries out the reaction ATP-dependent breakage, passage and rejoining of double-stranded DNA.. With respect to regulation, DNA supercoiling is inhibited by fluoroquinolones; IC(50) 1 ug/ml for sitafloxacin. Functionally, a type II topoisomerase that negatively supercoils closed circular double-stranded (ds) DNA in an ATP-dependent manner to modulate DNA topology and maintain chromosomes in an underwound state. Negative supercoiling favors strand separation, and DNA replication, transcription, recombination and repair, all of which involve strand separation. Also able to catalyze the interconversion of other topological isomers of dsDNA rings, including catenanes and knotted rings. Type II topoisomerases break and join 2 DNA strands simultaneously in an ATP-dependent manner. This Mycobacterium leprae (strain TN) protein is DNA gyrase subunit B.